A 151-amino-acid polypeptide reads, in one-letter code: Small ribosomal subunit protein bS6 (151 aa).

A disordered region spans residues 94–151 (EEHEQGPSAMMRKRDDDDRGERGERPRGPRPERGERGERGERGPRRPREDNIGEEGLY). The segment covering 105-144 (RKRDDDDRGERGERPRGPRPERGERGERGERGPRRPREDN) has biased composition (basic and acidic residues).

Belongs to the bacterial ribosomal protein bS6 family.

Binds together with bS18 to 16S ribosomal RNA. This is Small ribosomal subunit protein bS6 from Beijerinckia indica subsp. indica (strain ATCC 9039 / DSM 1715 / NCIMB 8712).